We begin with the raw amino-acid sequence, 564 residues long: MGLQACLLGLFALILSGKCSYSPEPDQRRTLPPGWVSLGRADPEEELSLTFALRQQNVERLSELVQAVSDPSSPQYGKYLTLENVADLVRPSPLTLHTVQKWLLAAGAQKCHSVITQDFLTCWLSIRQAELLLPGAEFHHYVGGPTETHVVRSPHPYQLPQALAPHVDFVGGLHRFPPTSSLRQHPEPQVTGTVGLHLGVTPSVIRKRYNLTSQDVGSGTSNNSQACAQFLEQYFHDSDLAQFMRLFGGNFAHQASVARVVGQQGRGRAGIEASLDVQYLMSAGANISTWVYSSPGRHEGQEPFLQWLMLLSNESALPHVHTVSYGDEEDSLSSAYIQRVNTELMKAAARGLTLLFASGDSGAGCWSVSGRHQFRPTFPASSPYVTTVGGTSFLEPFLTTNEIVDYISGGGFSNVFPRPSYQEEAVTKFLSSSPHLPPSSYFNASGRAYPDVAALSDGYWVVSNRVPIPWVSGTSASTPVFGGGILSLINEHRILSGRPPLGFLNPRLYQQHGAGLFDVTHGCHESCLDEEVEGQGFCSGPGWDPVTGWGTPNFPALPKTLLNP.

A signal peptide spans 1-19 (MGLQACLLGLFALILSGKC). The propeptide at 20 to 195 (SYSPEPDQRR…PEPQVTGTVG (176 aa)) is removed in mature form. The cysteines at positions 111 and 122 are disulfide-linked. The region spanning 199–564 (GVTPSVIRKR…PALPKTLLNP (366 aa)) is the Peptidase S53 domain. Residues Asn-210 and Asn-222 are each glycosylated (N-linked (GlcNAc...) asparagine). Residues Glu-272 and Asp-276 each act as charge relay system in the active site. N-linked (GlcNAc...) asparagine glycans are attached at residues Asn-286, Asn-313, and Asn-443. 2 disulfide bridges follow: Cys-365–Cys-527 and Cys-523–Cys-538. Ser-475 acts as the Charge relay system in catalysis. Ca(2+) contacts are provided by Asp-518 and Val-519. Ca(2+) is bound by residues Gly-540, Gly-542, and Asp-544.

As to quaternary structure, monomer. Interacts with CLN5. Interacts with CLN3. It depends on Ca(2+) as a cofactor. In terms of processing, activated by autocatalytic proteolytical processing upon acidification. N-glycosylation is required for processing and activity.

It localises to the lysosome. The protein resides in the melanosome. It catalyses the reaction Release of an N-terminal tripeptide from a polypeptide, but also has endopeptidase activity.. In terms of biological role, lysosomal serine protease with tripeptidyl-peptidase I activity. May act as a non-specific lysosomal peptidase which generates tripeptides from the breakdown products produced by lysosomal proteinases. Requires substrates with an unsubstituted N-terminus. In Pongo abelii (Sumatran orangutan), this protein is Tripeptidyl-peptidase 1 (TPP1).